A 252-amino-acid chain; its full sequence is Large ribosomal subunit protein uL4 (252 aa).

Belongs to the universal ribosomal protein uL4 family. As to quaternary structure, part of the 50S ribosomal subunit.

In terms of biological role, one of the primary rRNA binding proteins, this protein initially binds near the 5'-end of the 23S rRNA. It is important during the early stages of 50S assembly. It makes multiple contacts with different domains of the 23S rRNA in the assembled 50S subunit and ribosome. Forms part of the polypeptide exit tunnel. The chain is Large ribosomal subunit protein uL4 from Methanococcus maripaludis (strain C7 / ATCC BAA-1331).